An 875-amino-acid chain; its full sequence is Alanine--tRNA ligase (875 aa).

The Zn(2+) site is built by histidine 564, histidine 568, cysteine 666, and histidine 670.

This sequence belongs to the class-II aminoacyl-tRNA synthetase family. As to quaternary structure, homotetramer. It depends on Zn(2+) as a cofactor.

It is found in the cytoplasm. It carries out the reaction tRNA(Ala) + L-alanine + ATP = L-alanyl-tRNA(Ala) + AMP + diphosphate. Catalyzes the attachment of alanine to tRNA(Ala) in a two-step reaction: alanine is first activated by ATP to form Ala-AMP and then transferred to the acceptor end of tRNA(Ala). Also edits incorrectly charged Ser-tRNA(Ala) and Gly-tRNA(Ala) via its editing domain. The protein is Alanine--tRNA ligase of Yersinia enterocolitica serotype O:8 / biotype 1B (strain NCTC 13174 / 8081).